The chain runs to 126 residues: Fatty acid-binding protein 1, liver (126 aa).

Belongs to the calycin superfamily. Fatty-acid binding protein (FABP) family.

Its subcellular location is the cytoplasm. Its function is as follows. Binds free fatty acids and their coenzyme A derivatives, bilirubin, and some other small molecules in the cytoplasm. May be involved in intracellular lipid transport. The specificity of axolotl L-FABP differs from that of LB-FABP. The chain is Fatty acid-binding protein 1, liver from Ambystoma mexicanum (Axolotl).